The chain runs to 224 residues: Phosphoglycolate phosphatase (224 aa).

The active-site Nucleophile is the Asp8. Residues Asp8, Asp10, Gly11, and Gly43 each coordinate Mg(2+). Lys151 serves as a coordination point for substrate. Mg(2+) is bound by residues Asp174, Ser175, and Asp178.

This sequence belongs to the HAD-like hydrolase superfamily. Archaeal SPP-like hydrolase family. As to quaternary structure, homodimer. Mg(2+) is required as a cofactor.

It catalyses the reaction 2-phosphoglycolate + H2O = glycolate + phosphate. Inhibited by Ca(2+) ions and by high chloride ion concentration. By contrast, low chloride concentration (up to 50 mM) slightly activate the enzyme. Its function is as follows. Catalyzes the dephosphorylation of 2-phosphoglycolate. Also has significant, but less efficient, pyrophosphatase activity, since it is able to catalyze the release of phosphate from inorganic pyrophosphate (PPi). The polypeptide is Phosphoglycolate phosphatase (Thermoplasma acidophilum (strain ATCC 25905 / DSM 1728 / JCM 9062 / NBRC 15155 / AMRC-C165)).